A 502-amino-acid chain; its full sequence is NADH-quinone oxidoreductase subunit N (502 aa).

14 consecutive transmembrane segments (helical) span residues 16-36 (TLVP…IDLF), 47-67 (MLSL…AGVF), 85-105 (LAIL…PLAL), 113-133 (FSYP…QFMV), 138-158 (LILI…LIAM), 172-192 (FTMG…FYAL), 213-233 (IGFV…KLSM), 248-268 (SAAL…IVAM), 273-293 (FLIH…VVVT), 310-330 (MLAY…LIGT), 337-357 (LFLY…MLWI), 387-407 (ASIM…ALFW), 410-430 (MYLM…IMAL), and 470-490 (TIIG…NQLI).

It belongs to the complex I subunit 2 family. NDH-1 is composed of 14 different subunits. Subunits NuoA, H, J, K, L, M, N constitute the membrane sector of the complex.

It localises to the cell inner membrane. The enzyme catalyses a quinone + NADH + 5 H(+)(in) = a quinol + NAD(+) + 4 H(+)(out). Functionally, NDH-1 shuttles electrons from NADH, via FMN and iron-sulfur (Fe-S) centers, to quinones in the respiratory chain. The immediate electron acceptor for the enzyme in this species is believed to be ubiquinone. Couples the redox reaction to proton translocation (for every two electrons transferred, four hydrogen ions are translocated across the cytoplasmic membrane), and thus conserves the redox energy in a proton gradient. The chain is NADH-quinone oxidoreductase subunit N from Sulfurimonas denitrificans (strain ATCC 33889 / DSM 1251) (Thiomicrospira denitrificans (strain ATCC 33889 / DSM 1251)).